The chain runs to 207 residues: dTTP/UTP pyrophosphatase (207 aa).

Asp-79 (proton acceptor) is an active-site residue.

It belongs to the Maf family. YhdE subfamily. A divalent metal cation is required as a cofactor.

Its subcellular location is the cytoplasm. It catalyses the reaction dTTP + H2O = dTMP + diphosphate + H(+). It carries out the reaction UTP + H2O = UMP + diphosphate + H(+). In terms of biological role, nucleoside triphosphate pyrophosphatase that hydrolyzes dTTP and UTP. May have a dual role in cell division arrest and in preventing the incorporation of modified nucleotides into cellular nucleic acids. This is dTTP/UTP pyrophosphatase from Nitrobacter winogradskyi (strain ATCC 25391 / DSM 10237 / CIP 104748 / NCIMB 11846 / Nb-255).